Here is a 418-residue protein sequence, read N- to C-terminus: D-amino acid dehydrogenase (418 aa).

3 to 17 lines the FAD pocket; it reads VTILGAGVVGVTSAW.

It belongs to the DadA oxidoreductase family. It depends on FAD as a cofactor.

The enzyme catalyses a D-alpha-amino acid + A + H2O = a 2-oxocarboxylate + AH2 + NH4(+). Its pathway is amino-acid degradation; D-alanine degradation; NH(3) and pyruvate from D-alanine: step 1/1. In terms of biological role, oxidative deamination of D-amino acids. This chain is D-amino acid dehydrogenase, found in Agrobacterium fabrum (strain C58 / ATCC 33970) (Agrobacterium tumefaciens (strain C58)).